The following is a 375-amino-acid chain: Queuine tRNA-ribosyltransferase (375 aa).

Residue D89 is the Proton acceptor of the active site. Substrate contacts are provided by residues 89–93 (DSGGF), D143, Q187, and G214. Residues 245 to 251 (GVGKPED) are RNA binding. Residue D264 is the Nucleophile of the active site. The RNA binding; important for wobble base 34 recognition stretch occupies residues 269 to 273 (TRNAR). Residues C302, C304, C307, and H333 each contribute to the Zn(2+) site.

The protein belongs to the queuine tRNA-ribosyltransferase family. As to quaternary structure, homodimer. Within each dimer, one monomer is responsible for RNA recognition and catalysis, while the other monomer binds to the replacement base PreQ1. Zn(2+) serves as cofactor.

The catalysed reaction is 7-aminomethyl-7-carbaguanine + guanosine(34) in tRNA = 7-aminomethyl-7-carbaguanosine(34) in tRNA + guanine. It participates in tRNA modification; tRNA-queuosine biosynthesis. In terms of biological role, catalyzes the base-exchange of a guanine (G) residue with the queuine precursor 7-aminomethyl-7-deazaguanine (PreQ1) at position 34 (anticodon wobble position) in tRNAs with GU(N) anticodons (tRNA-Asp, -Asn, -His and -Tyr). Catalysis occurs through a double-displacement mechanism. The nucleophile active site attacks the C1' of nucleotide 34 to detach the guanine base from the RNA, forming a covalent enzyme-RNA intermediate. The proton acceptor active site deprotonates the incoming PreQ1, allowing a nucleophilic attack on the C1' of the ribose to form the product. After dissociation, two additional enzymatic reactions on the tRNA convert PreQ1 to queuine (Q), resulting in the hypermodified nucleoside queuosine (7-(((4,5-cis-dihydroxy-2-cyclopenten-1-yl)amino)methyl)-7-deazaguanosine). The protein is Queuine tRNA-ribosyltransferase of Salmonella choleraesuis (strain SC-B67).